Consider the following 66-residue polypeptide: 14-3-3-like protein 2 (66 aa).

It belongs to the 14-3-3 family.

This is 14-3-3-like protein 2 from Pseudotsuga menziesii (Douglas-fir).